The following is a 382-amino-acid chain: Galactokinase (382 aa).

Residue Glu-34–Asp-37 coordinates substrate. ATP is bound at residue Gly-124–Ser-130. Mg(2+) contacts are provided by Ser-130 and Glu-162. Asp-174 functions as the Proton acceptor in the catalytic mechanism. Residue Tyr-223 participates in substrate binding.

It belongs to the GHMP kinase family. GalK subfamily.

Its subcellular location is the cytoplasm. The enzyme catalyses alpha-D-galactose + ATP = alpha-D-galactose 1-phosphate + ADP + H(+). The protein operates within carbohydrate metabolism; galactose metabolism. Catalyzes the transfer of the gamma-phosphate of ATP to D-galactose to form alpha-D-galactose-1-phosphate (Gal-1-P). This Shigella dysenteriae serotype 1 (strain Sd197) protein is Galactokinase.